Here is a 358-residue protein sequence, read N- to C-terminus: Ornithine cyclodeaminase (358 aa).

Residues R52 and K76 each contribute to the L-ornithine site. Residues T91, R119, 146 to 147 (AQ), D168, T208, 231 to 234 (VGGD), K238, and S299 each bind NAD(+). R119 lines the L-ornithine pocket. D234 contacts L-ornithine. D234 serves as the catalytic Proton donor/acceptor. V300 is a binding site for L-ornithine.

Belongs to the ornithine cyclodeaminase/mu-crystallin family. It depends on NAD(+) as a cofactor.

The catalysed reaction is L-ornithine = L-proline + NH4(+). It functions in the pathway amino-acid biosynthesis; L-proline biosynthesis; L-proline from L-ornithine: step 1/1. Its function is as follows. Catalyzes the conversion of L-ornithine into L-proline with release of ammonia. In Brucella suis biovar 1 (strain 1330), this protein is Ornithine cyclodeaminase.